The sequence spans 561 residues: Putative transport protein KPK_3686 (561 aa).

5 consecutive transmembrane segments (helical) span residues L8–G28, L37–I57, F66–F86, M94–F114, and H158–A178. RCK C-terminal domains are found at residues L202–N288 and V292–F373. 5 helical membrane-spanning segments follow: residues L383 to F403, F406 to L426, F447 to G467, A478 to L498, and A540 to L560.

It belongs to the AAE transporter (TC 2.A.81) family. YbjL subfamily.

The protein resides in the cell membrane. The chain is Putative transport protein KPK_3686 from Klebsiella pneumoniae (strain 342).